Reading from the N-terminus, the 279-residue chain is Urease accessory protein UreD (279 aa).

The protein belongs to the UreD family. UreD, UreF and UreG form a complex that acts as a GTP-hydrolysis-dependent molecular chaperone, activating the urease apoprotein by helping to assemble the nickel containing metallocenter of UreC. The UreE protein probably delivers the nickel.

The protein resides in the cytoplasm. Its function is as follows. Required for maturation of urease via the functional incorporation of the urease nickel metallocenter. The sequence is that of Urease accessory protein UreD from Rhodopseudomonas palustris (strain HaA2).